The primary structure comprises 505 residues: MSEQQPQGAEQALDLNNELQSRREKLAALRENGIAFPNDFRRDTTSDKLHAAYGDKDNEELEALGVEVTVAGRMMTRRIMGKASFVTLQDVGGRIQLYVARDDLAEGVYNEEFKKWDLGDILGARGKLFKTKTGELSIHCTELRLLTKALRPLPDKFHGLADQETRYRQRYLDLIANDESRKTFQVRSQIMAAMRNFMVERGFMEVETPMMQVIPGGASARPFVTHHNALDIDMYLRIAPELYLKRLVVGGFERVFEINRNFRNEGVSPRHNPEFTMMELYMAYADYKDLIELTESLFRTLTQNVLGNTQVQYGDEVFDFGKPFVKLTMTEAIKKYRPETDLADLADMGKAVAIAESIGIKVEKSWGLGRVVTEIFEEVAESHLIQPTFITEYPAEVSPLARRNDVNPEITDRFEFFIGGREIGNGFSELNDAEDQAQRFADQANAKDAGDDEAMFYDEDYVTALEHGLPPTAGLGIGIDRMVMLFTNSHTIRDVILFPAMRPQK.

Residues E415 and E422 each coordinate Mg(2+).

It belongs to the class-II aminoacyl-tRNA synthetase family. As to quaternary structure, homodimer. The cofactor is Mg(2+).

It localises to the cytoplasm. The catalysed reaction is tRNA(Lys) + L-lysine + ATP = L-lysyl-tRNA(Lys) + AMP + diphosphate. The chain is Lysine--tRNA ligase from Serratia proteamaculans (strain 568).